The following is a 154-amino-acid chain: uncharacterized protein (154 aa).

The HTH marR-type domain occupies 7–143; it reads RSELEKTAVQ…IFSFVGKAAD (137 aa). A DNA-binding region (H-T-H motif) is located at residues 57–80; that stretch reads AGELGKKTGLSTGSVTALVDRLEK.

This is an uncharacterized protein from Bacillus subtilis (strain 168).